The following is a 397-amino-acid chain: Tyrosine aminotransferase (397 aa).

The substrate site is built by G34, Y66, W131, and N184. K247 is modified (N6-(pyridoxal phosphate)lysine). R375 is a binding site for substrate.

Belongs to the class-I pyridoxal-phosphate-dependent aminotransferase family. As to quaternary structure, homodimer. Pyridoxal 5'-phosphate serves as cofactor.

It carries out the reaction L-tyrosine + 2-oxoglutarate = 3-(4-hydroxyphenyl)pyruvate + L-glutamate. The catalysed reaction is 4-methylsulfanyl-2-oxobutanoate + L-tyrosine = 3-(4-hydroxyphenyl)pyruvate + L-methionine. It catalyses the reaction an aromatic L-alpha-amino acid + 2-oxoglutarate = an aromatic oxo-acid + L-glutamate. The enzyme catalyses L-aspartate + 2-oxoglutarate = oxaloacetate + L-glutamate. It participates in amino-acid biosynthesis; L-methionine biosynthesis via salvage pathway; L-methionine from S-methyl-5-thio-alpha-D-ribose 1-phosphate: step 6/6. Inhibited by malate and nitrotyrosine by approximately 20% at the higher concentration. At 100 uM, canaline and carboxymethoxylamine inhibit aminotransferase activity by 35 and 70%, respectively. Addition of 1.0 mM carboxymethoxylamine lead to a complete inhibition of the aminotransferase activity. In terms of biological role, catalyzes the formation of methionine from 2-keto-4-methylthiobutyrate (KMTB) primarily using aromatic amino acids (tyrosine, phenylalanine and tryptophan) or glutamate as the amino donors. Histidine, leucine, asparagine, or arginine are also functional amino donors but to a lesser extent. Can also use alpha-ketoglutarate, oxaloacetate and pyruvate as the amino acceptors. This chain is Tyrosine aminotransferase (tyrB), found in Klebsiella pneumoniae.